Consider the following 726-residue polypeptide: MILRTPQPKRLRSDAGESPFPTGATGSGNQLIIYEDSPLPAPAPLQTSHDHSADQHLCTYQCRQMVKADVLDALSTAEKQVEESKTKLQTLNANFTEADAERKHFRDKFLYSEQELAAAKAREKMLQEQLLMEINNSQERYTKELQSCHELEVKLQNEMNLRKKAESSAATAEEKAKLLEDKLTQLSGSVDREKKRLNNDIAQLGKEAKLSVARIGADLERMQCRAQNAETESNLLRSQLEHLKLIFDECLQEKTEVDKKLSSFTSEAASSSDNSVLVKHLQEELKRYEAEVREARKLKSRHLDAELLNVNLLEEQSRRERAESELSKFHDLQLSMEKLENELSSWKSLLNDIPGVSCPDDIVMRFSVLQNEVVQSTMKIGEASTRIKQLEETLEAIQLGRQNAVSEAALAKEKSEALKTDVKRIEVMLTLVTEEKEQLKAVVNELRKSNSEGSVSGAADGALIQGFESSLAKKENYIKDLEQDLNQLKDVNNRQRTEIELLNEKLVDEARRNKSLERDSDRLRSEISLLESKLGHGDYSAANTRVLRMVNTLGVENEAKQTIEALQAELQKTKERLQAVEELKSQSGDAGKLVDSHITGKIAQLKEQNATLEKREERYKTVFADRISVFRRACCELFGYKIVMDEHQRPNGIPVTRFTLQSIYAQSDDEKLEFEYESGNTSILNNEYASQGDIAKQIEIFIRKFNSIPAFTANLTMESFNRRTLY.

Residues 1–30 (MILRTPQPKRLRSDAGESPFPTGATGSGNQ) form a disordered region. Coiled-coil stretches lie at residues 68–246 (ADVL…LKLI) and 272–625 (SDNS…VFAD).

This sequence belongs to the MAD1 family. In terms of assembly, homodimer. Part of the mitotic checkpoint complex (MCC). Interacts with MAD2 and NUA.

It is found in the nucleus envelope. In terms of biological role, required for the execution of the mitotic checkpoint which monitors the process of kinetochore-spindle attachment and delays the onset of anaphase when this process is not complete. It inhibits the activity of the anaphase promoting complex by sequestering CDC20 until all chromosomes are aligned at the metaphase plate. Required for anchoring MAD2 to the nuclear envelope. The sequence is that of Mitotic spindle checkpoint protein MAD1 from Arabidopsis thaliana (Mouse-ear cress).